Consider the following 38-residue polypeptide: MKVRASVKKRCEHCKLIKRKGRVMVVCSKNPRHNQRQG.

The protein belongs to the bacterial ribosomal protein bL36 family.

This is Large ribosomal subunit protein bL36 from Kosmotoga olearia (strain ATCC BAA-1733 / DSM 21960 / TBF 19.5.1).